We begin with the raw amino-acid sequence, 490 residues long: Cytochrome P450 2C39 (490 aa).

Positions 1–25 are cleaved as a signal peptide; sequence MDLVTFLVLTLSSLILLSLWRQSCG. Residue cysteine 435 coordinates heme.

Belongs to the cytochrome P450 family. It depends on heme as a cofactor. Liver.

The protein localises to the endoplasmic reticulum membrane. The protein resides in the microsome membrane. It carries out the reaction an organic molecule + reduced [NADPH--hemoprotein reductase] + O2 = an alcohol + oxidized [NADPH--hemoprotein reductase] + H2O + H(+). The enzyme catalyses (5Z,8Z,11Z,14Z)-eicosatetraenoate + reduced [NADPH--hemoprotein reductase] + O2 = 11,12-epoxy-(5Z,8Z,14Z)-eicosatrienoate + oxidized [NADPH--hemoprotein reductase] + H2O + H(+). It catalyses the reaction (5Z,8Z,11Z,14Z)-eicosatetraenoate + reduced [NADPH--hemoprotein reductase] + O2 = 14,15-epoxy-(5Z,8Z,11Z)-eicosatrienoate + oxidized [NADPH--hemoprotein reductase] + H2O + H(+). The protein operates within lipid metabolism; arachidonate metabolism. A cytochrome P450 monooxygenase that primarily catalyzes the epoxidation of 11,12 and 14,15 double bonds of (5Z,8Z,11Z,14Z)-eicosatetraenoic acid (arachidonate) forming 11,12- and 14,15-epoxyeicosatrienoic acids (11,12- and 14,15-EET) regioisomers. Mechanistically, uses molecular oxygen inserting one oxygen atom into a substrate, and reducing the second into a water molecule, with two electrons provided by NADPH via cytochrome P450 reductase (CPR; NADPH--hemoprotein reductase). This chain is Cytochrome P450 2C39, found in Mus musculus (Mouse).